The primary structure comprises 511 residues: Glycoprotein (511 aa).

Residues 1-16 (MKCLLYLAFLFIGVNC) form the signal peptide. Residues 17–467 (KFTIVFPHNQ…FSSWKSSIAS (451 aa)) lie on the Virion surface side of the membrane. A trimerization region spans residues 18-35 (FTIVFPHNQKGNWKNVPS). 6 cysteine pairs are disulfide-bonded: cysteine 40/cysteine 300, cysteine 75/cysteine 108, cysteine 84/cysteine 130, cysteine 169/cysteine 174, cysteine 193/cysteine 240, and cysteine 235/cysteine 269. The interval 53 to 172 (IGTALQVKMP…QFINGKCSND (120 aa)) is fusion peptide. The N-linked (GlcNAc...) asparagine; by host glycan is linked to asparagine 179. The tract at residues 259-309 (DLFAAARFPECPEGSSISAPSQTSVDVSLIQDVERILDYSLCQETWSKIRA) is trimerization. A glycan (N-linked (GlcNAc...) asparagine; by host) is linked at asparagine 336. A trimerization region spans residues 383 to 405 (EIGPNGVLRTSLGYKFPLYMIGH). The chain crosses the membrane as a helical span at residues 468-488 (FFFIIGLIIGLFLVLRVGIYL). The S-palmitoyl cysteine; by host moiety is linked to residue cysteine 489. The Intravirion segment spans residues 489–511 (CIKLKHTKKRQIYTDIEMNRLGK). Residues 496–506 (KKRQIYTDIEM) carry the basolateral targeting ex vivo motif.

This sequence belongs to the vesiculovirus glycoprotein family. Homotrimer. Interacts with host LDL at target cell surface. Glycosylated by host. Palmitoylated by host.

It localises to the virion membrane. It is found in the host membrane. Attaches the virus to host LDL receptors, inducing clathrin-dependent endocytosis of the virion. In the endosome, the acidic pH induces conformational changes in the glycoprotein trimer, which trigger fusion between virus and endosomal membrane. This chain is Glycoprotein (G), found in Vesicular stomatitis Indiana virus (strain Orsay) (VSIV).